Here is a 505-residue protein sequence, read N- to C-terminus: Lysine--tRNA ligase, heat inducible (505 aa).

N6-acetyllysine occurs at positions 114 and 156. 2 residues coordinate Mg(2+): Glu-415 and Glu-422.

Belongs to the class-II aminoacyl-tRNA synthetase family. Homodimer. Mg(2+) is required as a cofactor.

Its subcellular location is the cytoplasm. It carries out the reaction tRNA(Lys) + L-lysine + ATP = L-lysyl-tRNA(Lys) + AMP + diphosphate. The chain is Lysine--tRNA ligase, heat inducible (lysU) from Escherichia coli O157:H7.